The sequence spans 686 residues: DNA ligase (686 aa).

NAD(+) is bound by residues 33-37 (DSVYD), 82-83 (SL), and E122. K124 functions as the N6-AMP-lysine intermediate in the catalytic mechanism. Residues R145, E182, K300, and K324 each coordinate NAD(+). Zn(2+) is bound by residues C418, C421, C436, and C441. The 87-residue stretch at 600–686 (AVSQILAGKK…PTVESGDLHP (87 aa)) folds into the BRCT domain.

The protein belongs to the NAD-dependent DNA ligase family. LigA subfamily. It depends on Mg(2+) as a cofactor. The cofactor is Mn(2+).

The catalysed reaction is NAD(+) + (deoxyribonucleotide)n-3'-hydroxyl + 5'-phospho-(deoxyribonucleotide)m = (deoxyribonucleotide)n+m + AMP + beta-nicotinamide D-nucleotide.. In terms of biological role, DNA ligase that catalyzes the formation of phosphodiester linkages between 5'-phosphoryl and 3'-hydroxyl groups in double-stranded DNA using NAD as a coenzyme and as the energy source for the reaction. It is essential for DNA replication and repair of damaged DNA. In Synechococcus sp. (strain JA-2-3B'a(2-13)) (Cyanobacteria bacterium Yellowstone B-Prime), this protein is DNA ligase.